Here is a 514-residue protein sequence, read N- to C-terminus: ATP synthase subunit alpha (514 aa).

169-176 (GDRQTGKT) is an ATP binding site.

This sequence belongs to the ATPase alpha/beta chains family. In terms of assembly, F-type ATPases have 2 components, CF(1) - the catalytic core - and CF(0) - the membrane proton channel. CF(1) has five subunits: alpha(3), beta(3), gamma(1), delta(1), epsilon(1). CF(0) has three main subunits: a(1), b(2) and c(9-12). The alpha and beta chains form an alternating ring which encloses part of the gamma chain. CF(1) is attached to CF(0) by a central stalk formed by the gamma and epsilon chains, while a peripheral stalk is formed by the delta and b chains.

The protein resides in the cell membrane. The enzyme catalyses ATP + H2O + 4 H(+)(in) = ADP + phosphate + 5 H(+)(out). Functionally, produces ATP from ADP in the presence of a proton gradient across the membrane. The alpha chain is a regulatory subunit. The chain is ATP synthase subunit alpha from Buchnera aphidicola subsp. Baizongia pistaciae (strain Bp).